Here is a 270-residue protein sequence, read N- to C-terminus: MYKLIAIDMDGTLLNDHHEVTEEVRDALHAAKAEGVKIVLCTGRPIGGVQRYLDELNLIEEGDYVIAYNGALVQNTHTNEVVSELSLGYDDLTSLYDLSLELKTPMHFFDSSNLYTPNRDISEFTVYESYVTQVPLHFRKIDEVPKDILIPKVMFIDKPENLSRVITSIPKDVREKYTMVRSAPFFYEILHSEASKGNAVRQLAQLLGIEQAEVMCIGDNGNDLTMIEWAGCGVAMANAIPEVLEAANFQTRSNNEHGVAHAIHELVLAK.

Residue D8 is the Nucleophile of the active site. D8 contacts Mg(2+). M9 contributes to the phosphate binding site. D10 is a binding site for Mg(2+). Phosphate contacts are provided by residues 42 to 43 (TG) and K196. Mg(2+) is bound at residue D219. A phosphate-binding site is contributed by N222.

The protein belongs to the HAD-like hydrolase superfamily. Cof family. Requires Mg(2+) as cofactor.

This chain is Putative phosphatase YxeH (yxeH), found in Bacillus subtilis (strain 168).